The following is a 127-amino-acid chain: Large ribosomal subunit protein uL22 (127 aa).

A compositionally biased stretch (low complexity) spans 106–117 (GAPEGVPVGGAV). Positions 106–127 (GAPEGVPVGGAVDTPGDEEEEE) are disordered.

The protein belongs to the universal ribosomal protein uL22 family. In terms of assembly, part of the 50S ribosomal subunit.

Functionally, this protein binds specifically to 23S rRNA; its binding is stimulated by other ribosomal proteins, e.g. L4, L17, and L20. It is important during the early stages of 50S assembly. It makes multiple contacts with different domains of the 23S rRNA in the assembled 50S subunit and ribosome. The globular domain of the protein is located near the polypeptide exit tunnel on the outside of the subunit, while an extended beta-hairpin is found that lines the wall of the exit tunnel in the center of the 70S ribosome. The chain is Large ribosomal subunit protein uL22 from Rubrobacter xylanophilus (strain DSM 9941 / JCM 11954 / NBRC 16129 / PRD-1).